The sequence spans 347 residues: Protein-glutamate methylesterase/protein-glutamine glutaminase (347 aa).

Residues 6-123 (RVLVVDDSPT…HRPFGDLAEK (118 aa)) enclose the Response regulatory domain. D57 is subject to 4-aspartylphosphate. The CheB-type methylesterase domain occupies 150–342 (FRVGRKIVAI…EEILKLTAAR (193 aa)). Catalysis depends on residues S162, H188, and D284.

The protein belongs to the CheB family. Post-translationally, phosphorylated by CheA. Phosphorylation of the N-terminal regulatory domain activates the methylesterase activity.

It localises to the cytoplasm. It carries out the reaction [protein]-L-glutamate 5-O-methyl ester + H2O = L-glutamyl-[protein] + methanol + H(+). The catalysed reaction is L-glutaminyl-[protein] + H2O = L-glutamyl-[protein] + NH4(+). Involved in chemotaxis. Part of a chemotaxis signal transduction system that modulates chemotaxis in response to various stimuli. Catalyzes the demethylation of specific methylglutamate residues introduced into the chemoreceptors (methyl-accepting chemotaxis proteins or MCP) by CheR. Also mediates the irreversible deamidation of specific glutamine residues to glutamic acid. In Rhizobium etli (strain ATCC 51251 / DSM 11541 / JCM 21823 / NBRC 15573 / CFN 42), this protein is Protein-glutamate methylesterase/protein-glutamine glutaminase.